Here is a 1892-residue protein sequence, read N- to C-terminus: Sodium channel protein type 4 subunit alpha A (1892 aa).

Over 1 to 125 (MATILPPPGT…RGAIKILIHS (125 aa)) the chain is Cytoplasmic. The disordered stretch occupies residues 34–54 (APKAGAHEEEEPPTPNPDLEA). One copy of the I repeat lies at 107 to 433 (ILSPFSLVRR…VVAMAYDEQN (327 aa)). The chain crosses the membrane as a helical span at residues 126–144 (LFSTLIMITILSNCVFMTM). Topologically, residues 145–151 (SNPPAWS) are extracellular. Residues 152-172 (KTVEYVFTGIYTFEATVKVLS) traverse the membrane as a helical segment. Topologically, residues 173 to 186 (RGFCVGPFTFLRDP) are cytoplasmic. The chain crosses the membrane as a helical span at residues 187–204 (WNWLDFMVISMAYITEFV). The Extracellular segment spans residues 205–210 (DLGNVS). Asn-208 carries N-linked (GlcNAc...) asparagine glycosylation. A helical transmembrane segment spans residues 211–227 (ALRTFRVLRALKTITVI). The Cytoplasmic portion of the chain corresponds to 228–246 (PGLKTIVAALIQSVKKMVD). The chain crosses the membrane as a helical span at residues 247-266 (VMILTVFALAVFALVGLQLF). Topologically, residues 267-370 (MGNLRHKCIR…PNYGYTSFDS (104 aa)) are extracellular. Cys-274 and Cys-339 are disulfide-bonded. N-linked (GlcNAc...) asparagine glycosylation is found at Asn-281, Asn-294, and Asn-341. Cys-348 and Cys-354 are disulfide-bonded. The pore-forming intramembrane region spans 371-395 (FGWAFLALFRLMTQDNWESLFQLTL). The Extracellular portion of the chain corresponds to 396–402 (RAAGQTY). Residues 403–423 (MLFFVVVIFLGSFYLINLILA) form a helical membrane-spanning segment. Residues 424–612 (VVAMAYDEQN…KWVHFVVMDP (189 aa)) are Cytoplasmic-facing. The stretch at 594–866 (CCEKWVVFKK…QIAIGRITRG (273 aa)) is one II repeat. A helical membrane pass occupies residues 613–631 (FVDLAITICIVLNTLFMAM). At 632 to 642 (EHYPMTEEFDY) the chain is on the extracellular side. A helical membrane pass occupies residues 643–662 (MLSVGNLVFTGIFAAEMFFK). The Cytoplasmic segment spans residues 663–676 (LIAMDPYYYFQVGW). The helical transmembrane segment at 677 to 696 (NIFDSIIVTLSLVELGLANV) threads the bilayer. Residues 697 to 698 (QG) are Extracellular-facing. Residues 699 to 716 (LSVLRSFRLLRVFKLAKS) traverse the membrane as a helical segment. At 717–732 (WPTLNMLIKIIGNSVG) the chain is on the cytoplasmic side. A helical transmembrane segment spans residues 733 to 751 (ALGNLTLVLAIIVFIFAVV). Topologically, residues 752-780 (GMQLFGKSYKDCVCKISSDCELPRWHMND) are extracellular. Cys-765 and Cys-771 are oxidised to a cystine. Positions 781 to 801 (FFHSFLIVFRILCGEWIETMW) form an intramembrane region, pore-forming. At 802-812 (DCMEVAGAGMC) the chain is on the extracellular side. A disulfide bridge connects residues Cys-803 and Cys-812. Residues 813–831 (LVVFMMVMVIGNLVVLNLF) form a helical membrane-spanning segment. Residues 832–1071 (LALLLSSFSG…TCFTIVEHDW (240 aa)) lie on the Cytoplasmic side of the membrane. Disordered stretches follow at residues 884 to 905 (REPQ…TEGM) and 945 to 982 (LGES…GVED). The span at 948-971 (SDSENPSEDDDDQEDDVDSEVTCE) shows a compositional bias: acidic residues. The stretch at 1052 to 1366 (KGKKWWNLRK…KKYYEAMKKL (315 aa)) is one III repeat. Residues 1072-1089 (FETFIIFMILLSSGALAF) traverse the membrane as a helical segment. Residues 1090 to 1102 (EDIYIERRRTVKI) are Extracellular-facing. The chain crosses the membrane as a helical span at residues 1103–1121 (VLEFADKVFTFIFVIEMLL). Residues 1122-1135 (KWVAYGFKTYFTNA) are Cytoplasmic-facing. The chain crosses the membrane as a helical span at residues 1136 to 1154 (WCWLDFFIVDISLISLSAN). The Extracellular portion of the chain corresponds to 1155–1162 (LMGFSDLG). The helical transmembrane segment at 1163–1181 (PIKSLRTLRALRPLRALSR) threads the bilayer. Topologically, residues 1182-1198 (FEGMRVVVNALIGAIPS) are cytoplasmic. Residues 1199–1218 (IFNVLLVCLIFWLIFSIMGV) form a helical membrane-spanning segment. Topologically, residues 1219 to 1270 (NLFAGKFYRCINTTTAELFPISVVNNKSDCVALQEATQEARWVNVKVNYDNV) are extracellular. Cys-1228 and Cys-1248 are disulfide-bonded. N-linked (GlcNAc...) asparagine glycans are attached at residues Asn-1230 and Asn-1244. Residues 1271–1292 (AKGYLSLLQIATFKGWMDIMYP) constitute an intramembrane region (pore-forming). Topologically, residues 1293–1309 (AVDSREVEEQPSYEINL) are extracellular. The helical transmembrane segment at 1310 to 1331 (YMYIYFVIFIIFGSFFTLNLFI) threads the bilayer. Topologically, residues 1332–1394 (GVIIDNFNQQ…LVFDFISQQF (63 aa)) are cytoplasmic. An important for rapid channel inactivation region spans residues 1350–1352 (IFM). An IV repeat occupies 1375–1673 (IPRPANLIQG…WEKFDTGGTQ (299 aa)). The helical transmembrane segment at 1395–1412 (FDIFIMVLICLNMVTMMV) threads the bilayer. Over 1413-1423 (ETDDQSPAKED) the chain is Extracellular. Residues 1424–1442 (FLFKVNVAFIVVFTGECTL) traverse the membrane as a helical segment. At 1443 to 1454 (KLFALRHYFFTN) the chain is on the cytoplasmic side. Residues 1455-1472 (GWNIFDFIVVILSIAGTM) form a helical membrane-spanning segment. Over 1473 to 1485 (LSDIIEKYFVSPT) the chain is Extracellular. A helical membrane pass occupies residues 1486–1502 (LFRVIRLARIGRILRLI). The Cytoplasmic segment spans residues 1503–1521 (KGARGIRTLLFALMMSLPA). The chain crosses the membrane as a helical span at residues 1522–1539 (LFNIGLLLFLIMFIFSIF). Topologically, residues 1540-1561 (GMSNFAYVKKEAGINDMFNFET) are extracellular. Positions 1562–1584 (FGSSIICLFQITTSAGWDTLLLP) form an intramembrane region, pore-forming. Over 1585–1614 (MLNKEPPDCDPAFENPGTDVKGNCGNPMMG) the chain is Extracellular. Cys-1593 and Cys-1608 are disulfide-bonded. The helical transmembrane segment at 1615 to 1637 (MVFFCSYIIISFLVVVNMYIAII) threads the bilayer. Residues 1638-1892 (LENFNVAQEE…TQTILRETNV (255 aa)) lie on the Cytoplasmic side of the membrane. The 30-residue stretch at 1767–1796 (EDMAAVVIQRAYRNHLHKRGIHHAAYIQRS) folds into the IQ domain. The segment at 1836–1856 (RRRPDPQTRCSGARCSPEPPE) is disordered.

Belongs to the sodium channel (TC 1.A.1.10) family. Nav1.4/SCN4A subfamily. In terms of assembly, voltage-gated sodium (Nav) channels consist of an ion-conducting alpha subunit which is functional on its own associated with regulatory beta subunits.

It localises to the cell membrane. It catalyses the reaction Na(+)(in) = Na(+)(out). In terms of biological role, pore-forming subunit of a voltage-gated sodium (Nav) channel that directly mediates the depolarizing phase of action potentials in excitable membranes. Navs, also called VGSCs (voltage-gated sodium channels) or VDSCs (voltage-dependent sodium channels), operate by switching between closed and open conformations depending on the voltage difference across the membrane. In the open conformation they allow Na(+) ions to selectively pass through the pore, along their electrochemical gradient. The influx of Na+ ions provokes membrane depolarization, initiating the propagation of electrical signals throughout cells and tissues. This Takifugu rubripes (Japanese pufferfish) protein is Sodium channel protein type 4 subunit alpha A (scn4aa).